A 420-amino-acid chain; its full sequence is Protein PEA2 (420 aa).

Positions 132–153 (LTKENNNSFPNSKRARSSTNMG) are enriched in polar residues. A disordered region spans residues 132 to 169 (LTKENNNSFPNSKRARSSTNMGGTDKFNKGAYHTDKAD). The span at 157-169 (KFNKGAYHTDKAD) shows a compositional bias: basic and acidic residues. Position 230 is a phosphoserine (serine 230). The tract at residues 323–363 (NSSRHNFGMSSPASSPVTWDPSSPSSVGSPTSGSGSRSLSI) is disordered. Polar residues predominate over residues 325-339 (SRHNFGMSSPASSPV). Residues 343–362 (PSSPSSVGSPTSGSGSRSLS) are compositionally biased toward low complexity.

In terms of biological role, localized to sites of polarized growth and is required for efficient mating and bipolar budding. This Saccharomyces cerevisiae (strain ATCC 204508 / S288c) (Baker's yeast) protein is Protein PEA2 (PEA2).